A 297-amino-acid chain; its full sequence is D-aminoacyl-tRNA deacylase (297 aa).

It belongs to the DtdA deacylase family. As to quaternary structure, monomer. The cofactor is Zn(2+).

The enzyme catalyses a D-aminoacyl-tRNA + H2O = a tRNA + a D-alpha-amino acid + H(+). The catalysed reaction is glycyl-tRNA(Ala) + H2O = tRNA(Ala) + glycine + H(+). In terms of biological role, D-aminoacyl-tRNA deacylase with broad substrate specificity. By recycling D-aminoacyl-tRNA to D-amino acids and free tRNA molecules, this enzyme counteracts the toxicity associated with the formation of D-aminoacyl-tRNA entities in vivo. This chain is D-aminoacyl-tRNA deacylase, found in Methanosarcina mazei (strain ATCC BAA-159 / DSM 3647 / Goe1 / Go1 / JCM 11833 / OCM 88) (Methanosarcina frisia).